Here is a 305-residue protein sequence, read N- to C-terminus: UDP-3-O-acyl-N-acetylglucosamine deacetylase (305 aa).

Zn(2+)-binding residues include H79, H238, and D242. H265 serves as the catalytic Proton donor.

This sequence belongs to the LpxC family. Requires Zn(2+) as cofactor.

The enzyme catalyses a UDP-3-O-[(3R)-3-hydroxyacyl]-N-acetyl-alpha-D-glucosamine + H2O = a UDP-3-O-[(3R)-3-hydroxyacyl]-alpha-D-glucosamine + acetate. It participates in glycolipid biosynthesis; lipid IV(A) biosynthesis; lipid IV(A) from (3R)-3-hydroxytetradecanoyl-[acyl-carrier-protein] and UDP-N-acetyl-alpha-D-glucosamine: step 2/6. In terms of biological role, catalyzes the hydrolysis of UDP-3-O-myristoyl-N-acetylglucosamine to form UDP-3-O-myristoylglucosamine and acetate, the committed step in lipid A biosynthesis. This is UDP-3-O-acyl-N-acetylglucosamine deacetylase from Haemophilus influenzae (strain PittGG).